A 314-amino-acid polypeptide reads, in one-letter code: MIOREX complex component 8 (314 aa).

Residues 132-312 (TLPEVIFLGG…RYVIFQSCGL (181 aa)) form the EngB-type G domain. GTP contacts are provided by residues 140–147 (GGTNVGKS), 173–177 (GFTKT), 191–194 (DSPG), 253–256 (TKMD), and 290–292 (SST). Mg(2+) contacts are provided by Ser-147 and Thr-175.

The protein belongs to the TRAFAC class TrmE-Era-EngA-EngB-Septin-like GTPase superfamily. EngB GTPase family. In terms of assembly, associates with the mitochondrial ribosome. The cofactor is Mg(2+). Sumoylated upon ethanol stress.

It localises to the mitochondrion. Component of MIOREX complexes, large expressome-like assemblies of ribosomes with factors involved in all the steps of post-transcriptional gene expression. The chain is MIOREX complex component 8 from Saccharomyces cerevisiae (strain ATCC 204508 / S288c) (Baker's yeast).